A 557-amino-acid chain; its full sequence is Cytochrome P450 734A2 (557 aa).

Residues tryptophan 13–alanine 35 traverse the membrane as a helical segment. Residue cysteine 495 participates in heme binding.

This sequence belongs to the cytochrome P450 family. Heme serves as cofactor. As to expression, expressed in roots, shoot apex, leaf sheaths and leaf blades.

Its subcellular location is the membrane. Functionally, cytochrome P450 involved in brassinosteroids (BRs) inactivation and regulation of BRs homeostasis. Is a multifunctional and multisubstrate enzyme that controls the endogenous bioactive BR content both by direct inactivation of castasterone (CS) and by decreasing the levels of BR precursors. Catalyzes the oxidation of carbon 22 hydroxylated BR intermediates to produce C26 oxidized metabolites. This Oryza sativa subsp. japonica (Rice) protein is Cytochrome P450 734A2 (CYP734A2).